The sequence spans 726 residues: MSMSDDTHNSLSTGKCPFHQGSHDRSAGAGTSSHDWWPNQLRVDLLNQHSNRSNPLGEDFDYRKEFSKLDYSALKGDLKALLSDSQPWWPADWGSYAGLFIRMAWHGAGTYRSVDGRGGAGRGQQRFAPLNSWPDNVSLDKARRLLWPIKQKYGQKISWADLFILAGNVALENSGFRTFGFGAGREDVWEPDLDVNWGDEKAWLTHRHPEALAKAPLGATEMGLIYVNPEGPDHSGEPLSAAAAIRATFGNMGMNDEETVALIGGGHTLGKTHGAAAASHVGVDPEAAPIELQGLGWSSDYGSGAGGDAITSGLEVVWSQTPTQWSNYFFENLFKYEWVQTRSPAGAIQFEAVDAPEIIPDPFDPSKKRKPTMLVTDLTLRFDPEFEKISRRFLNDPQAFNEAFARAWFKLTHRDMGPKARYIGPEVPKEDLIWQDPLPQPVFNPSQEDIVNLKAAIAASGLSVSELVSVAWASASTFRGGDKRGGANGARLALAPQRDWDVNAAAARVLPVLEEIQKSSGKASLADIIVLAGVVGVEQAASAAGVSISVPFAPGRVDARQDQTDIEMFELLEPIADGFRNYRARLDVSTTESLLIDKAQQLTLTAPEMTALVGGMRVLGANFDGSQNGVFTDRPGVLSNDFFVNLLDMRNEWKAADESKELFEGRDRLSGEVKFTATRADLVFGSNSVLRALAEVYASSDAREKFVKDFVAAWVKVMNLDRFDLL.

Positions 1–34 (MSMSDDTHNSLSTGKCPFHQGSHDRSAGAGTSSH) are disordered. Residues 105-226 (WHGAGTYRSV…LGATEMGLIY (122 aa)) constitute a cross-link (tryptophyl-tyrosyl-methioninium (Trp-Tyr) (with M-252)). Histidine 106 (proton acceptor) is an active-site residue. Residues 226-252 (YVNPEGPDHSGEPLSAAAAIRATFGNM) constitute a cross-link (tryptophyl-tyrosyl-methioninium (Tyr-Met) (with W-105)). Position 267 (histidine 267) interacts with heme b.

It belongs to the peroxidase family. Peroxidase/catalase subfamily. In terms of assembly, homodimer or homotetramer. It depends on heme b as a cofactor. Formation of the three residue Trp-Tyr-Met cross-link is important for the catalase, but not the peroxidase activity of the enzyme.

It catalyses the reaction H2O2 + AH2 = A + 2 H2O. The catalysed reaction is 2 H2O2 = O2 + 2 H2O. Its function is as follows. Bifunctional enzyme with both catalase and broad-spectrum peroxidase activity. The sequence is that of Catalase-peroxidase from Citrobacter koseri (strain ATCC BAA-895 / CDC 4225-83 / SGSC4696).